The following is a 169-amino-acid chain: Thaumatin-like pathogenesis-related protein 4 (169 aa).

Residues 1–21 form the signal peptide; it reads MATSSTVLFLLLAVFAASASA.

This sequence belongs to the thaumatin family.

Associated with resistance against stem rust fungi. This chain is Thaumatin-like pathogenesis-related protein 4 (RASTL-4), found in Avena sativa (Oat).